The primary structure comprises 264 residues: Thymidylate synthase (264 aa).

Residues R21 and 126–127 (RR) contribute to the dUMP site. C146 functions as the Nucleophile in the catalytic mechanism. DUMP is bound by residues 166–169 (RSAD), N177, and 207–209 (HLY). D169 serves as a coordination point for (6R)-5,10-methylene-5,6,7,8-tetrahydrofolate. A263 contacts (6R)-5,10-methylene-5,6,7,8-tetrahydrofolate.

The protein belongs to the thymidylate synthase family. Bacterial-type ThyA subfamily. As to quaternary structure, homodimer.

Its subcellular location is the cytoplasm. The catalysed reaction is dUMP + (6R)-5,10-methylene-5,6,7,8-tetrahydrofolate = 7,8-dihydrofolate + dTMP. Its pathway is pyrimidine metabolism; dTTP biosynthesis. Catalyzes the reductive methylation of 2'-deoxyuridine-5'-monophosphate (dUMP) to 2'-deoxythymidine-5'-monophosphate (dTMP) while utilizing 5,10-methylenetetrahydrofolate (mTHF) as the methyl donor and reductant in the reaction, yielding dihydrofolate (DHF) as a by-product. This enzymatic reaction provides an intracellular de novo source of dTMP, an essential precursor for DNA biosynthesis. The polypeptide is Thymidylate synthase (Halorhodospira halophila (strain DSM 244 / SL1) (Ectothiorhodospira halophila (strain DSM 244 / SL1))).